A 128-amino-acid polypeptide reads, in one-letter code: Fluoride-specific ion channel FluC (128 aa).

A run of 4 helical transmembrane segments spans residues 5–25 (ALVA…SMVI), 32–52 (TFPW…GLFA), 70–90 (FFMV…LQTL), and 106–126 (VGSV…ATII). Positions 77 and 80 each coordinate Na(+).

This sequence belongs to the fluoride channel Fluc/FEX (TC 1.A.43) family.

It localises to the cell inner membrane. The catalysed reaction is fluoride(in) = fluoride(out). Na(+) is not transported, but it plays an essential structural role and its presence is essential for fluoride channel function. In terms of biological role, fluoride-specific ion channel. Important for reducing fluoride concentration in the cell, thus reducing its toxicity. This Paramagnetospirillum magneticum (strain ATCC 700264 / AMB-1) (Magnetospirillum magneticum) protein is Fluoride-specific ion channel FluC.